Consider the following 417-residue polypeptide: mRNA cap guanine-N(7) methyltransferase (417 aa).

One can recognise an mRNA cap 0 methyltransferase domain in the interval serine 129–valine 412. MRNA is bound at residue asparagine 138–asparagine 139. Positions 142, 160, 182, 211, 237, and 242 each coordinate S-adenosyl-L-methionine.

The protein belongs to the class I-like SAM-binding methyltransferase superfamily. mRNA cap 0 methyltransferase family.

The protein resides in the nucleus. The enzyme catalyses a 5'-end (5'-triphosphoguanosine)-ribonucleoside in mRNA + S-adenosyl-L-methionine = a 5'-end (N(7)-methyl 5'-triphosphoguanosine)-ribonucleoside in mRNA + S-adenosyl-L-homocysteine. Responsible for methylating the 5'-cap structure of mRNAs. The chain is mRNA cap guanine-N(7) methyltransferase (ABD1) from Candida glabrata (strain ATCC 2001 / BCRC 20586 / JCM 3761 / NBRC 0622 / NRRL Y-65 / CBS 138) (Yeast).